The primary structure comprises 145 residues: Large ribosomal subunit protein uL13 (145 aa).

It belongs to the universal ribosomal protein uL13 family. As to quaternary structure, part of the 50S ribosomal subunit.

This protein is one of the early assembly proteins of the 50S ribosomal subunit, although it is not seen to bind rRNA by itself. It is important during the early stages of 50S assembly. In Bacillus cereus (strain G9842), this protein is Large ribosomal subunit protein uL13.